The chain runs to 330 residues: tRNA U34 carboxymethyltransferase (330 aa).

Residues lysine 91, tryptophan 105, lysine 110, glycine 130, aspartate 152–serine 154, isoleucine 181–glutamate 182, methionine 196, tyrosine 200, and arginine 315 each bind carboxy-S-adenosyl-L-methionine.

The protein belongs to the class I-like SAM-binding methyltransferase superfamily. CmoB family. Homotetramer.

The catalysed reaction is carboxy-S-adenosyl-L-methionine + 5-hydroxyuridine(34) in tRNA = 5-carboxymethoxyuridine(34) in tRNA + S-adenosyl-L-homocysteine + H(+). In terms of biological role, catalyzes carboxymethyl transfer from carboxy-S-adenosyl-L-methionine (Cx-SAM) to 5-hydroxyuridine (ho5U) to form 5-carboxymethoxyuridine (cmo5U) at position 34 in tRNAs. The chain is tRNA U34 carboxymethyltransferase from Shewanella loihica (strain ATCC BAA-1088 / PV-4).